We begin with the raw amino-acid sequence, 207 residues long: Octanoyltransferase (207 aa).

In terms of domain architecture, BPL/LPL catalytic spans 27–203; that stretch reads ADTEDELWVV…HLETQLTPKA (177 aa). Substrate contacts are provided by residues 66–73, 133–135, and 146–148; these read RGGQITYH, SLG, and GLA. The active-site Acyl-thioester intermediate is the C164.

Belongs to the LipB family.

It localises to the cytoplasm. The catalysed reaction is octanoyl-[ACP] + L-lysyl-[protein] = N(6)-octanoyl-L-lysyl-[protein] + holo-[ACP] + H(+). Its pathway is protein modification; protein lipoylation via endogenous pathway; protein N(6)-(lipoyl)lysine from octanoyl-[acyl-carrier-protein]: step 1/2. In terms of biological role, catalyzes the transfer of endogenously produced octanoic acid from octanoyl-acyl-carrier-protein onto the lipoyl domains of lipoate-dependent enzymes. Lipoyl-ACP can also act as a substrate although octanoyl-ACP is likely to be the physiological substrate. The polypeptide is Octanoyltransferase (Neisseria gonorrhoeae (strain ATCC 700825 / FA 1090)).